We begin with the raw amino-acid sequence, 282 residues long: Ribosomal RNA small subunit methyltransferase A (282 aa).

S-adenosyl-L-methionine-binding residues include His15, Leu17, Gly42, Glu64, Asp89, and Asn109.

This sequence belongs to the class I-like SAM-binding methyltransferase superfamily. rRNA adenine N(6)-methyltransferase family. RsmA subfamily.

The protein localises to the cytoplasm. It carries out the reaction adenosine(1518)/adenosine(1519) in 16S rRNA + 4 S-adenosyl-L-methionine = N(6)-dimethyladenosine(1518)/N(6)-dimethyladenosine(1519) in 16S rRNA + 4 S-adenosyl-L-homocysteine + 4 H(+). Specifically dimethylates two adjacent adenosines (A1518 and A1519) in the loop of a conserved hairpin near the 3'-end of 16S rRNA in the 30S particle. May play a critical role in biogenesis of 30S subunits. The polypeptide is Ribosomal RNA small subunit methyltransferase A (Prochlorococcus marinus (strain MIT 9211)).